We begin with the raw amino-acid sequence, 297 residues long: Phosphatidylserine decarboxylase proenzyme (297 aa).

Active-site charge relay system; for autoendoproteolytic cleavage activity residues include D92, H149, and S254. S254 acts as the Schiff-base intermediate with substrate; via pyruvic acid; for decarboxylase activity in catalysis. Pyruvic acid (Ser); by autocatalysis is present on S254.

It belongs to the phosphatidylserine decarboxylase family. PSD-B subfamily. Prokaryotic type I sub-subfamily. As to quaternary structure, heterodimer of a large membrane-associated beta subunit and a small pyruvoyl-containing alpha subunit. Pyruvate is required as a cofactor. Is synthesized initially as an inactive proenzyme. Formation of the active enzyme involves a self-maturation process in which the active site pyruvoyl group is generated from an internal serine residue via an autocatalytic post-translational modification. Two non-identical subunits are generated from the proenzyme in this reaction, and the pyruvate is formed at the N-terminus of the alpha chain, which is derived from the carboxyl end of the proenzyme. The autoendoproteolytic cleavage occurs by a canonical serine protease mechanism, in which the side chain hydroxyl group of the serine supplies its oxygen atom to form the C-terminus of the beta chain, while the remainder of the serine residue undergoes an oxidative deamination to produce ammonia and the pyruvoyl prosthetic group on the alpha chain. During this reaction, the Ser that is part of the protease active site of the proenzyme becomes the pyruvoyl prosthetic group, which constitutes an essential element of the active site of the mature decarboxylase.

It is found in the cell membrane. It catalyses the reaction a 1,2-diacyl-sn-glycero-3-phospho-L-serine + H(+) = a 1,2-diacyl-sn-glycero-3-phosphoethanolamine + CO2. Its pathway is phospholipid metabolism; phosphatidylethanolamine biosynthesis; phosphatidylethanolamine from CDP-diacylglycerol: step 2/2. Catalyzes the formation of phosphatidylethanolamine (PtdEtn) from phosphatidylserine (PtdSer). The chain is Phosphatidylserine decarboxylase proenzyme from Bordetella bronchiseptica (strain ATCC BAA-588 / NCTC 13252 / RB50) (Alcaligenes bronchisepticus).